Here is a 75-residue protein sequence, read N- to C-terminus: RNA-binding protein KhpA (75 aa).

Residues 29-75 form the KH domain; that stretch reads SIILELKVAPEDMGKVIGKQGRIAKAIRTVIKAAAVKENKRVVVEII.

It belongs to the KhpA RNA-binding protein family. In terms of assembly, forms a complex with KhpB.

It is found in the cytoplasm. A probable RNA chaperone. Forms a complex with KhpB which binds to cellular RNA and controls its expression. Plays a role in peptidoglycan (PG) homeostasis and cell length regulation. The protein is RNA-binding protein KhpA of Clostridium acetobutylicum (strain ATCC 824 / DSM 792 / JCM 1419 / IAM 19013 / LMG 5710 / NBRC 13948 / NRRL B-527 / VKM B-1787 / 2291 / W).